The primary structure comprises 385 residues: Pepsin A (385 aa).

Positions 1-15 (MKWLLLLSLVVLSEC) are cleaved as a signal peptide. The propeptide at 16 to 59 (LVKVPLVRKKSLRQNLIKNGKLKDFLKTHKHNPASKYFPEAAAL) is activation peptide. Residues 73–382 (YFGTIGIGTP…DRANNKVGLA (310 aa)) form the Peptidase A1 domain. The active site involves Asp-91. An intrachain disulfide couples Cys-104 to Cys-109. Phosphoserine is present on Ser-127. A disulfide bond links Cys-265 and Cys-269. Asp-274 is a catalytic residue. A disulfide bridge links Cys-308 with Cys-341.

It belongs to the peptidase A1 family. Post-translationally, minor amounts of the active enzyme occur with 'Ala-58' at the amino end.

It localises to the secreted. The enzyme catalyses Preferential cleavage: hydrophobic, preferably aromatic, residues in P1 and P1' positions. Cleaves 1-Phe-|-Val-2, 4-Gln-|-His-5, 13-Glu-|-Ala-14, 14-Ala-|-Leu-15, 15-Leu-|-Tyr-16, 16-Tyr-|-Leu-17, 23-Gly-|-Phe-24, 24-Phe-|-Phe-25 and 25-Phe-|-Tyr-26 bonds in the B chain of insulin.. Shows particularly broad specificity; although bonds involving phenylalanine and leucine are preferred, many others are also cleaved to some extent. The polypeptide is Pepsin A (PGA) (Sus scrofa (Pig)).